Consider the following 29-residue polypeptide: Glucagon (29 aa).

This sequence belongs to the glucagon family.

It localises to the secreted. Its function is as follows. Promotes hydrolysis of glycogen and lipids, and raises the blood sugar level. The sequence is that of Glucagon (gcg) from Thunnus obesus (Bigeye tuna).